The chain runs to 332 residues: Anthranilate phosphoribosyltransferase (332 aa).

5-phospho-alpha-D-ribose 1-diphosphate-binding positions include Gly79, 82 to 83, Ser87, 89 to 92, 107 to 115, and Ser119; these read GD, NIST, and KHGNRSVSS. Residue Gly79 participates in anthranilate binding. Ser91 is a Mg(2+) binding site. Asn110 contacts anthranilate. Arg165 contacts anthranilate. Mg(2+)-binding residues include Asp223 and Glu224.

This sequence belongs to the anthranilate phosphoribosyltransferase family. In terms of assembly, homodimer. Requires Mg(2+) as cofactor.

The enzyme catalyses N-(5-phospho-beta-D-ribosyl)anthranilate + diphosphate = 5-phospho-alpha-D-ribose 1-diphosphate + anthranilate. The protein operates within amino-acid biosynthesis; L-tryptophan biosynthesis; L-tryptophan from chorismate: step 2/5. Catalyzes the transfer of the phosphoribosyl group of 5-phosphorylribose-1-pyrophosphate (PRPP) to anthranilate to yield N-(5'-phosphoribosyl)-anthranilate (PRA). The chain is Anthranilate phosphoribosyltransferase from Photorhabdus laumondii subsp. laumondii (strain DSM 15139 / CIP 105565 / TT01) (Photorhabdus luminescens subsp. laumondii).